Reading from the N-terminus, the 419-residue chain is Innexin inx5 (419 aa).

The Cytoplasmic portion of the chain corresponds to 1-21; the sequence is MFSAVKPLSKYLQFKSIRIYD. Residues 22–42 form a helical membrane-spanning segment; the sequence is SVFTIHSRCTVVILLTCSLLL. At 43–162 the chain is on the extracellular side; the sequence is SARQYFGDPI…QTERQYLRYY (120 aa). A helical membrane pass occupies residues 163–183; the sequence is QWVIILLLFQSFVFYFPSCLW. Residues 184 to 238 are Cytoplasmic-facing; it reads KVWEGRRLKQLCSEVGDALLSEETYNTRLRMLVKYFTTDYEDMHFCYMAKYVFCE. The helical transmembrane segment at 239–259 threads the bilayer; sequence VLNFLISVVNIIVLEVFLNGF. The Extracellular portion of the chain corresponds to 260–320; that stretch reads WSKYLRALAT…ILPLNILNEK (61 aa). A helical membrane pass occupies residues 321 to 341; it reads IFVFLWAWFLLMALMSGLNLL. The Cytoplasmic segment spans residues 342–419; that stretch reads CRLAMICSRY…ASGSTLESPV (78 aa).

Belongs to the pannexin family. In terms of tissue distribution, expressed in the cortex of the pupal CNS and at low levels in the wing imaginal disk.

The protein localises to the cell membrane. Its subcellular location is the cell junction. The protein resides in the gap junction. Functionally, structural component of the gap junctions. The chain is Innexin inx5 (Inx5) from Drosophila melanogaster (Fruit fly).